Consider the following 314-residue polypeptide: Lysophospholipase D GDPD1 (314 aa).

The Extracellular portion of the chain corresponds to 1 to 3 (MSS). A helical membrane pass occupies residues 4–24 (TAAFYLLSTLGGYLVTSFLLL). The Cytoplasmic segment spans residues 25–195 (KYPTLLHQRK…VEKCYKENSD (171 aa)). One can recognise a GP-PDE domain in the interval 40 to 309 (SKHISHRGGA…DYPTKLRDFL (270 aa)). A divalent metal cation contacts are provided by Glu-72, Asp-74, and His-87. A helical transmembrane segment spans residues 196–216 (IPILFSLQRVLLILGLFFTGL). The Extracellular segment spans residues 217 to 314 (LPFVPIREQF…LRDFLHNFSA (98 aa)).

The protein belongs to the glycerophosphoryl diester phosphodiesterase family. Widely expressed with high expression level in testis.

It is found in the cytoplasm. Its subcellular location is the membrane. The protein localises to the perinuclear region. It localises to the endoplasmic reticulum. The catalysed reaction is a 1-O-alkyl-sn-glycero-3-phosphocholine + H2O = a 1-O-alkyl-sn-glycero-3-phosphate + choline + H(+). It catalyses the reaction 1-hexadecanoyl-sn-glycero-3-phosphocholine + H2O = 1-hexadecanoyl-sn-glycero-3-phosphate + choline + H(+). It carries out the reaction N-hexadecanoyl-sn-glycero-3-phosphoethanolamine + H2O = N-hexadecanoylethanolamine + sn-glycerol 3-phosphate + H(+). The enzyme catalyses N-(5Z,8Z,11Z,14Z-eicosatetraenoyl)-1-(9Z-octadecenoyl)-sn-glycero-3-phosphoethanolamine + H2O = N-(5Z,8Z,11Z,14Z-eicosatetraenoyl)-ethanolamine + 1-(9Z-octadecenoyl)-sn-glycero-3-phosphate + H(+). The catalysed reaction is N,1-di-(9Z-octadecenoyl)-sn-glycero-3-phosphoethanolamine + H2O = N-(9Z-octadecenoyl) ethanolamine + 1-(9Z-octadecenoyl)-sn-glycero-3-phosphate + H(+). It catalyses the reaction N-hexadecanoyl-1-(9Z-octadecenoyl)-sn-glycero-3-phosphoethanolamine + H2O = N-hexadecanoylethanolamine + 1-(9Z-octadecenoyl)-sn-glycero-3-phosphate + H(+). It carries out the reaction 1-O-(1Z-octadecenyl)-sn-glycero-3-phospho-N-hexadecanoyl-ethanolamine + H2O = 1-O-(1Z-octadecenyl)-sn-glycero-3-phosphate + N-hexadecanoylethanolamine + H(+). The enzyme catalyses 1-hexadecanoyl-sn-glycero-3-phosphoethanolamine + H2O = 1-hexadecanoyl-sn-glycero-3-phosphate + ethanolamine + H(+). The catalysed reaction is 1-O-hexadecyl-sn-glycero-3-phosphocholine + H2O = 1-O-hexadecyl-sn-glycero-3-phosphate + choline + H(+). It catalyses the reaction 1-(9Z-octadecenoyl)-sn-glycero-3-phosphocholine + H2O = 1-(9Z-octadecenoyl)-sn-glycero-3-phosphate + choline + H(+). It carries out the reaction N,1-dihexadecanoyl-sn-glycero-3-phosphoethanolamine + H2O = N-hexadecanoylethanolamine + 1-hexadecanoyl-sn-glycero-3-phosphate + H(+). The enzyme catalyses 1-O-(1Z-octadecenyl)-sn-glycero-3-phospho-(N-5Z,8Z,11Z,14Z-eicosatetraenoyl)-ethanolamine + H2O = 1-O-(1Z-octadecenyl)-sn-glycero-3-phosphate + N-(5Z,8Z,11Z,14Z-eicosatetraenoyl)-ethanolamine + H(+). The catalysed reaction is 1-O-(1Z-octadecenyl)-sn-glycero-3-phospho-(N-9Z-octadecenoyl)-ethanolamine + H2O = 1-O-(1Z-octadecenyl)-sn-glycero-3-phosphate + N-(9Z-octadecenoyl) ethanolamine + H(+). Its activity is regulated as follows. Lysophospholipase D activity is increased by magnesium and manganese and inhibited by calcium in a concentration dependent manner. Loss of lysophospholipase D activity by addition of EDTA. Hydrolyzes lysoglycerophospholipids to produce lysophosphatidic acid (LPA) and the corresponding amines. Shows a preference for 1-O-alkyl-sn-glycero-3-phosphocholine (lyso-PAF), lysophosphatidylethanolamine (lyso-PE) and lysophosphatidylcholine (lyso-PC). May be involved in bioactive N-acylethanolamine biosynthesis from both N-acyl-lysoplasmenylethanolamin (N-acyl-lysoPlsEt) and N-acyl-lysophosphatidylethanolamin (N-acyl-lysoPE). In addition, hydrolyzes glycerophospho-N-acylethanolamine to N-acylethanolamine. Does not display glycerophosphodiester phosphodiesterase activity, since it cannot hydrolyze either glycerophosphoinositol or glycerophosphocholine. This Homo sapiens (Human) protein is Lysophospholipase D GDPD1.